The primary structure comprises 107 residues: Glutaconyl-CoA decarboxylase subunit delta (107 aa).

A helical transmembrane segment spans residues 10 to 32; sequence MINMTIVFGVLIVLGILMVLIHA. The interval 37-60 is disordered; sequence KKVQGKKKPVVAKPAPSAAASKRQ. Residues 47–57 are compositionally biased toward low complexity; sequence VAKPAPSAAAS.

This sequence belongs to the OadG family. Heterooctamer consisting of two alpha, two beta, two gamma and two delta subunits.

It localises to the cell membrane. It carries out the reaction (2E)-glutaconyl-CoA + Na(+)(in) + H(+) = (2E)-butenoyl-CoA + Na(+)(out) + CO2. The protein operates within amino-acid degradation; L-glutamate degradation via hydroxyglutarate pathway; crotonoyl-CoA from L-glutamate: step 5/5. Part of the primary sodium pump glutaconyl-CoA decarboxylase (GCD). Possible membrane anchor for the alpha subunit. The sequence is that of Glutaconyl-CoA decarboxylase subunit delta (gcdD) from Acidaminococcus fermentans (strain ATCC 25085 / DSM 20731 / CCUG 9996 / CIP 106432 / VR4).